The sequence spans 270 residues: MNNRIIYVVSDSVGETAELVVKAALSQFNGSADDTHVRRIPYVEDIGTINEVISLAKADGGIICFTLVVPEIREYLIAEAEKANVLYYDIIGPLIDKMETAYGLTAKYEPGRVRQLDEDYFKKVEAIEFAVKYDDGRDPRGILKADIVLIGVSRTSKTPLSQYLAHKRLKVANVPIVPEVDPPEELFNVDPKKCIGLKISPDKLNHIRKERLKSLGLNDKAIYANINRIKEELEYFEKIVDRIGCQVVDVSNKAVEETANIIHHLKTKNI.

Residue 151–158 (GVSRTSKT) coordinates ADP.

Belongs to the pyruvate, phosphate/water dikinase regulatory protein family. PDRP subfamily.

It catalyses the reaction N(tele)-phospho-L-histidyl/L-threonyl-[pyruvate, phosphate dikinase] + ADP = N(tele)-phospho-L-histidyl/O-phospho-L-threonyl-[pyruvate, phosphate dikinase] + AMP + H(+). It carries out the reaction N(tele)-phospho-L-histidyl/O-phospho-L-threonyl-[pyruvate, phosphate dikinase] + phosphate + H(+) = N(tele)-phospho-L-histidyl/L-threonyl-[pyruvate, phosphate dikinase] + diphosphate. Its function is as follows. Bifunctional serine/threonine kinase and phosphorylase involved in the regulation of the pyruvate, phosphate dikinase (PPDK) by catalyzing its phosphorylation/dephosphorylation. The chain is Putative pyruvate, phosphate dikinase regulatory protein (yqfL) from Bacillus subtilis (strain 168).